The following is a 422-amino-acid chain: 26S proteasome non-ATPase regulatory subunit 11 (422 aa).

Alanine 2 is subject to N-acetylalanine. Phosphoserine is present on residues serine 14 and serine 23. One can recognise a PCI domain in the interval 224-392 (DWKTAYSYFY…GVLIIFDEPP (169 aa)). Lysine 274 is covalently cross-linked (Glycyl lysine isopeptide (Lys-Gly) (interchain with G-Cter in SUMO2)).

Belongs to the proteasome subunit S9 family. As to quaternary structure, component of the 19S proteasome regulatory particle complex. The 26S proteasome consists of a 20S core particle (CP) and two 19S regulatory subunits (RP). The regulatory particle is made of a lid composed of 9 subunits including PSMD11, a base containing 6 ATPases and few additional components. Post-translationally, phosphorylated by AMPK.

It localises to the nucleus. Its subcellular location is the cytoplasm. It is found in the cytosol. Component of the 26S proteasome, a multiprotein complex involved in the ATP-dependent degradation of ubiquitinated proteins. This complex plays a key role in the maintenance of protein homeostasis by removing misfolded or damaged proteins, which could impair cellular functions, and by removing proteins whose functions are no longer required. Therefore, the proteasome participates in numerous cellular processes, including cell cycle progression, apoptosis, or DNA damage repair. In the complex, PSMD11 is required for proteasome assembly. Plays a key role in increased proteasome activity in embryonic stem cells (ESCs): its high expression in ESCs promotes enhanced assembly of the 26S proteasome, followed by higher proteasome activity. The protein is 26S proteasome non-ATPase regulatory subunit 11 (PSMD11) of Bos taurus (Bovine).